A 631-amino-acid chain; its full sequence is Leukocyte immunoglobulin-like receptor subfamily B member 3 (631 aa).

Residues 1 to 23 (MTPALTALLCLGLSLGPRTRVQA) form the signal peptide. The Extracellular portion of the chain corresponds to 24–443 (GPFPKPTLWA…STPGLGRYLE (420 aa)). 4 Ig-like C2-type domains span residues 42–100 (GSPV…RCHY), 111–229 (DPLE…SLLT), 225–314 (PSLL…DPLN), and 338–419 (GENV…LVVS). A disulfide bridge connects residues Cys-49 and Cys-98. Residues 59-70 (RLHKEGSPEPLD) are compositionally biased toward basic and acidic residues. Positions 59-78 (RLHKEGSPEPLDRNNPLEPK) are disordered. Asn-139 carries an N-linked (GlcNAc...) asparagine glycan. Cystine bridges form between Cys-144–Cys-196 and Cys-245–Cys-296. N-linked (GlcNAc...) asparagine glycans are attached at residues Asn-280, Asn-301, and Asn-340. Cys-345 and Cys-396 are oxidised to a cystine. Residues 444–464 (VLIGVSVAFVLLLFLLLFLLL) traverse the membrane as a helical segment. Over 465-631 (RRQRHSKHRT…PSIYATLAIH (167 aa)) the chain is Cytoplasmic. The disordered stretch occupies residues 470–631 (SKHRTSDQRK…PSIYATLAIH (162 aa)). Over residues 473–482 (RTSDQRKTDF) the composition is skewed to basic and acidic residues. Positions 512-517 (NLYAAV) match the ITIM motif 1 motif. Basic and acidic residues-rich tracts occupy residues 520 to 537 (TQSEDRVELDSQSPHDED) and 567 to 581 (LDTKDRQVEEDRQMD). The segment covering 588 to 600 (EASQDVTYAQLHS) has biased composition (polar residues). 2 short sequence motifs (ITIM motif) span residues 593–598 (VTYAQL) and 623–628 (SIYATL). Phosphotyrosine; by LYN occurs at positions 595 and 625.

Interacts with LYN, PTPN6/SHP-1 and PTPN11/SHP-2. In terms of processing, phosphorylated on tyrosine residues by LYN. Phosphorylation at Tyr-595 and Tyr-625 is important for interaction with PTPN6/SHP-1 and PTPN11/SHP-2. As to expression, detected in monocytes and B-cells.

It is found in the cell membrane. Functionally, may act as receptor for class I MHC antigens. Becomes activated upon coligation of LILRB3 and immune receptors, such as FCGR2B and the B-cell receptor. Down-regulates antigen-induced B-cell activation by recruiting phosphatases to its immunoreceptor tyrosine-based inhibitor motifs (ITIM). The chain is Leukocyte immunoglobulin-like receptor subfamily B member 3 (LILRB3) from Homo sapiens (Human).